The following is a 391-amino-acid chain: Coproporphyrin III ferrochelatase (391 aa).

Ser-79 and Tyr-148 together coordinate Fe-coproporphyrin III. Fe(2+) contacts are provided by His-211 and Glu-305.

Belongs to the ferrochelatase family.

The protein localises to the cytoplasm. It carries out the reaction Fe-coproporphyrin III + 2 H(+) = coproporphyrin III + Fe(2+). Its pathway is porphyrin-containing compound metabolism; protoheme biosynthesis. Involved in coproporphyrin-dependent heme b biosynthesis. Catalyzes the insertion of ferrous iron into coproporphyrin III to form Fe-coproporphyrin III. This is Coproporphyrin III ferrochelatase from Tropheryma whipplei (strain TW08/27) (Whipple's bacillus).